Reading from the N-terminus, the 92-residue chain is UPF0250 protein VP0718 (92 aa).

Belongs to the UPF0250 family.

The protein is UPF0250 protein VP0718 of Vibrio parahaemolyticus serotype O3:K6 (strain RIMD 2210633).